We begin with the raw amino-acid sequence, 294 residues long: BOI-related E3 ubiquitin-protein ligase 1 (294 aa).

Positions 168–204 (LQERVKNLYVENQIWRDLAQTNEATANNLRSNLEQVL) are WRD domain. Residues 183–212 (RDLAQTNEATANNLRSNLEQVLAQVDDLDA) are a coiled coil. The RING-type zinc-finger motif lies at 244-281 (CKRCGELTASVLVLPCRHLCLCTVCGSSALLRTCPVCD).

Interacts with the DELLA proteins GAI, RGA, RGL1, RGL2 and RGL3.

The catalysed reaction is S-ubiquitinyl-[E2 ubiquitin-conjugating enzyme]-L-cysteine + [acceptor protein]-L-lysine = [E2 ubiquitin-conjugating enzyme]-L-cysteine + N(6)-ubiquitinyl-[acceptor protein]-L-lysine.. It functions in the pathway protein degradation; proteasomal ubiquitin-dependent pathway. Its function is as follows. E3 ubiquitin-protein ligase involved in regulation of abiotic stress responses. Not involved in ubiquitination of MYB108/BOS1. Has no effect on the stability of the DELLA proteins. In Arabidopsis thaliana (Mouse-ear cress), this protein is BOI-related E3 ubiquitin-protein ligase 1 (BRG1).